Here is a 614-residue protein sequence, read N- to C-terminus: Methionine--tRNA ligase (614 aa).

The short motif at 11–21 (PYTNGPRHIGH) is the 'HIGH' region element. 4 residues coordinate Zn(2+): cysteine 143, cysteine 146, cysteine 156, and cysteine 159. The 'KMSKS' region signature appears at 359-363 (QFSTS). Position 362 (threonine 362) interacts with ATP.

This sequence belongs to the class-I aminoacyl-tRNA synthetase family. MetG type 1 subfamily. As to quaternary structure, monomer. Requires Zn(2+) as cofactor.

The protein localises to the cytoplasm. It carries out the reaction tRNA(Met) + L-methionine + ATP = L-methionyl-tRNA(Met) + AMP + diphosphate. Is required not only for elongation of protein synthesis but also for the initiation of all mRNA translation through initiator tRNA(fMet) aminoacylation. This is Methionine--tRNA ligase from Beutenbergia cavernae (strain ATCC BAA-8 / DSM 12333 / CCUG 43141 / JCM 11478 / NBRC 16432 / NCIMB 13614 / HKI 0122).